Here is a 196-residue protein sequence, read N- to C-terminus: Probable malonic semialdehyde reductase RutE (196 aa).

Belongs to the nitroreductase family. HadB/RutE subfamily. It depends on FMN as a cofactor.

The catalysed reaction is 3-hydroxypropanoate + NADP(+) = 3-oxopropanoate + NADPH + H(+). May reduce toxic product malonic semialdehyde to 3-hydroxypropionic acid, which is excreted. This is Probable malonic semialdehyde reductase RutE from Escherichia coli (strain SMS-3-5 / SECEC).